Here is a 262-residue protein sequence, read N- to C-terminus: Hydroxyethylthiazole kinase (262 aa).

M43 lines the substrate pocket. Residues R118 and T164 each contribute to the ATP site. Residue A191 coordinates substrate.

The protein belongs to the Thz kinase family. It depends on Mg(2+) as a cofactor.

It carries out the reaction 5-(2-hydroxyethyl)-4-methylthiazole + ATP = 4-methyl-5-(2-phosphooxyethyl)-thiazole + ADP + H(+). It participates in cofactor biosynthesis; thiamine diphosphate biosynthesis; 4-methyl-5-(2-phosphoethyl)-thiazole from 5-(2-hydroxyethyl)-4-methylthiazole: step 1/1. Its function is as follows. Catalyzes the phosphorylation of the hydroxyl group of 4-methyl-5-beta-hydroxyethylthiazole (THZ). The polypeptide is Hydroxyethylthiazole kinase (Cereibacter sphaeroides (strain ATCC 17025 / ATH 2.4.3) (Rhodobacter sphaeroides)).